The following is a 374-amino-acid chain: Mannitol-1-phosphate 5-dehydrogenase (374 aa).

3–14 contacts NAD(+); the sequence is AIHFGAGNIGRG.

It belongs to the mannitol dehydrogenase family.

The enzyme catalyses D-mannitol 1-phosphate + NAD(+) = beta-D-fructose 6-phosphate + NADH + H(+). This Halalkalibacterium halodurans (strain ATCC BAA-125 / DSM 18197 / FERM 7344 / JCM 9153 / C-125) (Bacillus halodurans) protein is Mannitol-1-phosphate 5-dehydrogenase.